A 302-amino-acid polypeptide reads, in one-letter code: HTH-type transcriptional regulator AlsR (302 aa).

One can recognise an HTH lysR-type domain in the interval 1–58; sequence MELRHLQYFIAVAEELHFGKAARRLNMTQPPLSQQIKQLEEEVGVTLLKRTKRFVELT. Residues 18-37 constitute a DNA-binding region (H-T-H motif); sequence FGKAARRLNMTQPPLSQQIK.

This sequence belongs to the LysR transcriptional regulatory family.

Functionally, regulates the expression of the alsSD operon for acetoin biosynthesis. This is HTH-type transcriptional regulator AlsR (alsR) from Bacillus subtilis (strain 168).